A 44-amino-acid polypeptide reads, in one-letter code: Photosystem I reaction center subunit IX (44 aa).

The chain crosses the membrane as a helical span at residues 7 to 27 (YLSVAPVLSTLSLGFFAGFLI).

The protein belongs to the PsaJ family.

It localises to the plastid membrane. Its function is as follows. May help in the organization of the PsaE and PsaF subunits. The polypeptide is Photosystem I reaction center subunit IX (Cuscuta obtusiflora (Peruvian dodder)).